Reading from the N-terminus, the 774-residue chain is E3 ubiquitin-protein ligase UHRF1 (774 aa).

The 78-residue stretch at 1–78 (MWIQVRTMDG…IQLLVRQSLA (78 aa)) folds into the Ubiquitin-like domain. Phosphoserine occurs at positions 76, 91, 93, 95, and 161. The tract at residues 83-120 (TKERDSELSDSDSGYGVGHSESDKSSTHGEGTADGDDK) is disordered. Tudor-like regions lie at residues 129–205 (GLYK…ARAR) and 212–280 (DLEV…IELP). Residue K276 forms a Glycyl lysine isopeptide (Lys-Gly) (interchain with G-Cter in SUMO2) linkage. The residue at position 284 (S284) is a Phosphoserine. Positions 293 to 298 (RKSGPS) are linker. Residue S295 is modified to Phosphoserine; by PKA. The PHD-type zinc-finger motif lies at 296–363 (GPSCQYCKDD…EWYCPSCRTD (68 aa)). Histone H3R2me0 binding regions lie at residues 330–334 (CDECD) and 350–352 (PPE). S365 carries the phosphoserine modification. K382 participates in a covalent cross-link: Glycyl lysine isopeptide (Lys-Gly) (interchain with G-Cter in SUMO2). A methyl-CpG binding and interaction with HDAC1 region spans residues 382 to 605 (KMASATSSSR…QLGLTMQYPE (224 aa)). K396 is subject to N6-acetyllysine. Residues 416–578 (GPIPGVPVGT…FIVWRYLLRR (163 aa)) form the YDG domain. The interval 442-443 (HV) is required to promote base flipping. DNA-binding positions include 460–461 (AG) and D466. Required for formation of a 5-methylcytosine-binding pocket stretches follow at residues 463-466 (YEDD) and 475-478 (YTGS). S511 is subject to Phosphoserine. K542 bears the N6-acetyllysine; alternate mark. K542 is covalently cross-linked (Glycyl lysine isopeptide (Lys-Gly) (interchain with G-Cter in SUMO2); alternate). Positions 616 to 657 (KNRKRPAKALEQGPSSSKIGKSKRKSTGPATTSPRVSKKSKL) are disordered. Position 631 is a phosphoserine; by CDK1 (S631). 2 positions are modified to phosphoserine: S641 and S648. Residue K656 forms a Glycyl lysine isopeptide (Lys-Gly) (interchain with G-Cter in SUMO2) linkage. The segment at 705–744 (CICCQELVFRPVTTVCQHNVCKDCLDRSFRAQVFSCPACR) adopts an RING-type zinc-finger fold. Phosphoserine is present on S751.

As to quaternary structure, interacts with DNMT3A and DNMT3B. Interacts with DNMT1; the interaction is direct. Interacts with USP7; leading to its deubiquitination. Interacts with histone H3. Interacts with HDAC1, but not with HDAC2. Interacts with BLTP3A. Interacts with PML. Interacts with EHMT2. Binds methylated CpG containing oligonucleotides. Interacts with ZNF263; recruited to the SIX3 promoter along with other proteins involved in chromatin modification and transcriptional corepression where it contributes to transcriptional repression. Interacts with UHRF2. Interacts with FANCD2. Interacts with TET1 isoform 2; this interaction induces the recruitment of TET1 isoform 2 to replicating heterochromatin. In terms of processing, phosphorylation at Ser-295 of the linker region decreases the binding to H3K9me3. Phosphorylation at Ser-631 by CDK1 during M phase impairs interaction with USP7, preventing deubiquitination and leading to degradation by the proteasome. Ubiquitinated; which leads to proteasomal degradation. Autoubiquitinated; interaction with USP7 leads to deubiquitination and prevents degradation. Ubiquitination and degradation takes place during M phase, when phosphorylation at Ser-631 prevents interaction with USP7 and subsequent deubiquitination. Polyubiquitination may be stimulated by DNA damage.

Its subcellular location is the nucleus. The enzyme catalyses S-ubiquitinyl-[E2 ubiquitin-conjugating enzyme]-L-cysteine + [acceptor protein]-L-lysine = [E2 ubiquitin-conjugating enzyme]-L-cysteine + N(6)-ubiquitinyl-[acceptor protein]-L-lysine.. It functions in the pathway protein modification; protein ubiquitination. Functionally, multidomain protein that acts as a key epigenetic regulator by bridging DNA methylation and chromatin modification. Specifically recognizes and binds hemimethylated DNA at replication forks via its YDG domain and recruits DNMT1 methyltransferase to ensure faithful propagation of the DNA methylation patterns through DNA replication. In addition to its role in maintenance of DNA methylation, also plays a key role in chromatin modification: through its tudor-like regions and PHD-type zinc fingers, specifically recognizes and binds histone H3 trimethylated at 'Lys-9' (H3K9me3) and unmethylated at 'Arg-2' (H3R2me0), respectively, and recruits chromatin proteins. Enriched in pericentric heterochromatin where it recruits different chromatin modifiers required for this chromatin replication. Also localizes to euchromatic regions where it negatively regulates transcription possibly by impacting DNA methylation and histone modifications. Has E3 ubiquitin-protein ligase activity by mediating the ubiquitination of target proteins such as histone H3 and PML. It is still unclear how E3 ubiquitin-protein ligase activity is related to its role in chromatin in vivo. Plays a role in DNA repair by cooperating with UHRF2 to ensure recruitment of FANCD2 to interstrand cross-links (ICLs) leading to FANCD2 activation. Plays a pivotal role in the establishment of correct spindle architecture by catalyzing the 'Lys-63'-linked ubiquitination of KIF11, thereby controlling KIF11 localization on the spindle. In Rattus norvegicus (Rat), this protein is E3 ubiquitin-protein ligase UHRF1 (Uhrf1).